We begin with the raw amino-acid sequence, 274 residues long: Momilactone A synthase (274 aa).

Belongs to the short-chain dehydrogenases/reductases (SDR) family.

It carries out the reaction 3beta-hydroxy-9beta-pimara-7,15-dien-19,6beta-olide + NAD(+) = momilactone A + NADH + H(+). It catalyses the reaction 3beta-hydroxy-9beta-pimara-7,15-dien-19,6beta-olide + NADP(+) = momilactone A + NADPH + H(+). Involved in momilactone phytoalexins biosynthesis. Catalyzes the last step of momilactone A biosynthesis. In Oryza sativa subsp. japonica (Rice), this protein is Momilactone A synthase.